Reading from the N-terminus, the 288-residue chain is Syntaxin-1B (288 aa).

Residues 1–13 are compositionally biased toward basic and acidic residues; the sequence is MKDRTQELRSAKD. Residues 1–20 form a disordered region; sequence MKDRTQELRSAKDSDDEEEV. Residues 1–264 lie on the Cytoplasmic side of the membrane; it reads MKDRTQELRS…KYQSKARRKK (264 aa). Ser10 and Ser14 each carry phosphoserine. A coiled-coil region spans residues 29–104; it reads MDEFFEQVEE…IEQSIEQEEG (76 aa). The region spanning 191 to 253 is the t-SNARE coiled-coil homology domain; the sequence is LNEIETRHNE…ERAVSDTKKA (63 aa). The helical; Anchor for type IV membrane protein transmembrane segment at 265–288 threads the bilayer; that stretch reads IMIIICCVVLGVVLASSIGGTLGL.

The protein belongs to the syntaxin family. As to quaternary structure, interacts with OTOF. Interacts with SYT6 and SYT8; the interaction is Ca(2+)-dependent. Post-translationally, phosphorylated by CK2.

It is found in the membrane. The protein resides in the nucleus. It localises to the cytoplasm. Its subcellular location is the cytoskeleton. The protein localises to the microtubule organizing center. It is found in the centrosome. The protein resides in the spindle. Functionally, potentially involved in docking of synaptic vesicles at presynaptic active zones. May mediate Ca(2+)-regulation of exocytosis acrosomal reaction in sperm. The polypeptide is Syntaxin-1B (STX1B) (Homo sapiens (Human)).